A 225-amino-acid chain; its full sequence is Tryptophan synthase beta chain (225 aa).

The protein belongs to the TrpB family. As to quaternary structure, tetramer of two alpha and two beta chains. Pyridoxal 5'-phosphate is required as a cofactor.

It catalyses the reaction (1S,2R)-1-C-(indol-3-yl)glycerol 3-phosphate + L-serine = D-glyceraldehyde 3-phosphate + L-tryptophan + H2O. It participates in amino-acid biosynthesis; L-tryptophan biosynthesis; L-tryptophan from chorismate: step 5/5. In terms of biological role, the beta subunit is responsible for the synthesis of L-tryptophan from indole and L-serine. This is Tryptophan synthase beta chain (trpB) from Buchnera aphidicola subsp. Rhopalosiphum padi.